Reading from the N-terminus, the 169-residue chain is Hydroperoxy fatty acid reductase gpx1 (169 aa).

Cysteine 41 is an active-site residue.

The protein belongs to the glutathione peroxidase family. In terms of assembly, monomer.

The catalysed reaction is a hydroperoxy polyunsaturated fatty acid + NADPH + H(+) = a hydroxy polyunsaturated fatty acid + NADP(+) + H2O. Mercaptosuccinate, pCMB, and nethylmaleimide act as inhibitors of the catalytic activity. Functionally, hydroperoxy fatty acid reductase essential for the removal of lipid hydroperoxides under normal and stress conditions, leading to the protection of membrane integrity. The chain is Hydroperoxy fatty acid reductase gpx1 (gpx1) from Synechocystis sp. (strain ATCC 27184 / PCC 6803 / Kazusa).